The following is a 236-amino-acid chain: Ureidoacrylate amidohydrolase RutB (236 aa).

The active-site Proton acceptor is aspartate 24. The active site involves lysine 133. The Nucleophile role is filled by cysteine 166.

Belongs to the isochorismatase family. RutB subfamily.

It carries out the reaction (Z)-3-ureidoacrylate + H2O + H(+) = (Z)-3-aminoacrylate + NH4(+) + CO2. The catalysed reaction is (Z)-3-ureidoacrylate + H2O = (Z)-3-aminoacrylate + carbamate + H(+). The enzyme catalyses (Z)-2-methylureidoacrylate + H2O + H(+) = (Z)-2-methylaminoacrylate + NH4(+) + CO2. Hydrolyzes ureidoacrylate to form aminoacrylate and carbamate. The carbamate hydrolyzes spontaneously, thereby releasing one of the nitrogen atoms of the pyrimidine ring as ammonia and one of its carbon atoms as CO2. The polypeptide is Ureidoacrylate amidohydrolase RutB (Klebsiella pneumoniae subsp. pneumoniae (strain ATCC 700721 / MGH 78578)).